The sequence spans 476 residues: Siroheme synthase (476 aa).

Residues 1-207 (MTANVLFPLF…QRHAEAEAVL (207 aa)) form a precorrin-2 dehydrogenase /sirohydrochlorin ferrochelatase region. NAD(+) is bound by residues 25 to 26 (KV) and 46 to 47 (PS). At serine 132 the chain carries Phosphoserine. The tract at residues 220–476 (GSVTLVGAGA…SAPCPPALIL (257 aa)) is uroporphyrinogen-III C-methyltransferase. Aspartate 252 (proton acceptor) is an active-site residue. Lysine 274 acts as the Proton donor in catalysis. Residues 305–307 (GGD), valine 310, 335–336 (TA), methionine 387, and glycine 416 each bind S-adenosyl-L-methionine.

It in the N-terminal section; belongs to the precorrin-2 dehydrogenase / sirohydrochlorin ferrochelatase family. In the C-terminal section; belongs to the precorrin methyltransferase family.

The catalysed reaction is uroporphyrinogen III + 2 S-adenosyl-L-methionine = precorrin-2 + 2 S-adenosyl-L-homocysteine + H(+). It carries out the reaction precorrin-2 + NAD(+) = sirohydrochlorin + NADH + 2 H(+). It catalyses the reaction siroheme + 2 H(+) = sirohydrochlorin + Fe(2+). The protein operates within cofactor biosynthesis; adenosylcobalamin biosynthesis; precorrin-2 from uroporphyrinogen III: step 1/1. It functions in the pathway cofactor biosynthesis; adenosylcobalamin biosynthesis; sirohydrochlorin from precorrin-2: step 1/1. Its pathway is porphyrin-containing compound metabolism; siroheme biosynthesis; precorrin-2 from uroporphyrinogen III: step 1/1. It participates in porphyrin-containing compound metabolism; siroheme biosynthesis; siroheme from sirohydrochlorin: step 1/1. The protein operates within porphyrin-containing compound metabolism; siroheme biosynthesis; sirohydrochlorin from precorrin-2: step 1/1. Multifunctional enzyme that catalyzes the SAM-dependent methylations of uroporphyrinogen III at position C-2 and C-7 to form precorrin-2 via precorrin-1. Then it catalyzes the NAD-dependent ring dehydrogenation of precorrin-2 to yield sirohydrochlorin. Finally, it catalyzes the ferrochelation of sirohydrochlorin to yield siroheme. In Xylella fastidiosa (strain 9a5c), this protein is Siroheme synthase.